Consider the following 308-residue polypeptide: Oxygen-dependent coproporphyrinogen-III oxidase (308 aa).

Serine 100 lines the substrate pocket. Positions 104 and 114 each coordinate a divalent metal cation. Histidine 114 acts as the Proton donor in catalysis. Position 116 to 118 (116 to 118) interacts with substrate; sequence NFR. Histidine 153 and histidine 183 together coordinate a divalent metal cation. Residues 248-283 form an important for dimerization region; that stretch reads YVEFNLVFDRGTIFGLQSGGRTESILSSMPPMATWK. 266 to 268 is a substrate binding site; that stretch reads GGR.

It belongs to the aerobic coproporphyrinogen-III oxidase family. Homodimer. A divalent metal cation is required as a cofactor.

It localises to the cytoplasm. The catalysed reaction is coproporphyrinogen III + O2 + 2 H(+) = protoporphyrinogen IX + 2 CO2 + 2 H2O. It functions in the pathway porphyrin-containing compound metabolism; protoporphyrin-IX biosynthesis; protoporphyrinogen-IX from coproporphyrinogen-III (O2 route): step 1/1. Its function is as follows. Involved in the heme biosynthesis. Catalyzes the aerobic oxidative decarboxylation of propionate groups of rings A and B of coproporphyrinogen-III to yield the vinyl groups in protoporphyrinogen-IX. In Francisella tularensis subsp. holarctica (strain FTNF002-00 / FTA), this protein is Oxygen-dependent coproporphyrinogen-III oxidase.